A 364-amino-acid chain; its full sequence is DNA polymerase IV (364 aa).

The 185-residue stretch at 14–198 (IIHIDMDAFF…LPIEKFHGVG (185 aa)) folds into the UmuC domain. Mg(2+) contacts are provided by Asp-18 and Asp-116. The active site involves Glu-117.

This sequence belongs to the DNA polymerase type-Y family. Monomer. Mg(2+) serves as cofactor.

It is found in the cytoplasm. It catalyses the reaction DNA(n) + a 2'-deoxyribonucleoside 5'-triphosphate = DNA(n+1) + diphosphate. Its function is as follows. Poorly processive, error-prone DNA polymerase involved in untargeted mutagenesis. Copies undamaged DNA at stalled replication forks, which arise in vivo from mismatched or misaligned primer ends. These misaligned primers can be extended by PolIV. Exhibits no 3'-5' exonuclease (proofreading) activity. May be involved in translesional synthesis, in conjunction with the beta clamp from PolIII. This Streptococcus pyogenes serotype M18 (strain MGAS8232) protein is DNA polymerase IV.